A 451-amino-acid polypeptide reads, in one-letter code: D-inositol 3-phosphate glycosyltransferase (451 aa).

His-21 is a binding site for 1D-myo-inositol 3-phosphate. UDP-N-acetyl-alpha-D-glucosamine-binding positions include 27–28 (QP) and Gly-35. 1D-myo-inositol 3-phosphate contacts are provided by residues 32–37 (DAGGMN), Lys-90, Tyr-123, Thr-147, and Arg-167. The UDP-N-acetyl-alpha-D-glucosamine site is built by Arg-241, Lys-246, and Gln-305. 3 residues coordinate Mg(2+): Tyr-314, Arg-315, and Ala-317. UDP-N-acetyl-alpha-D-glucosamine contacts are provided by Glu-327 and Glu-335. Thr-341 is a Mg(2+) binding site.

Belongs to the glycosyltransferase group 1 family. MshA subfamily. In terms of assembly, homodimer.

The enzyme catalyses 1D-myo-inositol 3-phosphate + UDP-N-acetyl-alpha-D-glucosamine = 1D-myo-inositol 2-acetamido-2-deoxy-alpha-D-glucopyranoside 3-phosphate + UDP + H(+). Its function is as follows. Catalyzes the transfer of a N-acetyl-glucosamine moiety to 1D-myo-inositol 3-phosphate to produce 1D-myo-inositol 2-acetamido-2-deoxy-glucopyranoside 3-phosphate in the mycothiol biosynthesis pathway. The chain is D-inositol 3-phosphate glycosyltransferase from Nocardia farcinica (strain IFM 10152).